We begin with the raw amino-acid sequence, 186 residues long: Ribosome-recycling factor (186 aa).

The protein belongs to the RRF family.

It is found in the cytoplasm. Functionally, responsible for the release of ribosomes from messenger RNA at the termination of protein biosynthesis. May increase the efficiency of translation by recycling ribosomes from one round of translation to another. The sequence is that of Ribosome-recycling factor from Chlorobium limicola (strain DSM 245 / NBRC 103803 / 6330).